The sequence spans 291 residues: Homeobox protein knotted-1-like 7 (291 aa).

Residues 194 to 214 (ELKLELKQGFKSRIEDVREEI) enclose the ELK domain. Positions 215-278 (MRKRRAGKLP…NQRKRNWHNN (64 aa)) form a DNA-binding region, homeobox; TALE-type.

It belongs to the TALE/KNOX homeobox family. In terms of assembly, may form heterodimeric complex with the TALE/BELL proteins. Interacts with OFP1, OFP2, OFP3, OFP4 and OFP6.

Its subcellular location is the nucleus. In terms of biological role, may be involved in secondary cell wall biosynthesis. The polypeptide is Homeobox protein knotted-1-like 7 (KNAT7) (Arabidopsis thaliana (Mouse-ear cress)).